Consider the following 349-residue polypeptide: Heparin sulfate O-sulfotransferase (349 aa).

The Cytoplasmic segment spans residues 1-17; that stretch reads MFRKLLKMWILLRPTHW. A helical; Signal-anchor for type II membrane protein transmembrane segment spans residues 18–38; the sequence is LILIALCAVTCAGYWLLWSEI. At 39–349 the chain is on the lumenal side; sequence RLEHAFKPLS…KFMYEKIRPK (311 aa). 2 N-linked (GlcNAc...) asparagine glycosylation sites follow: Asn-107 and Asn-126. Active-site residues include His-139 and His-141. 2 disulfide bridges follow: Cys-200–Cys-208 and Cys-221–Cys-227. Residue Asn-282 is glycosylated (N-linked (GlcNAc...) asparagine).

The protein belongs to the sulfotransferase 3 family. Homotrimer.

It localises to the golgi apparatus membrane. Catalyzes the transfer of sulfate to the C2-position of selected hexuronic acid residues within the maturing heparan sulfate (HS). The polypeptide is Heparin sulfate O-sulfotransferase (Drosophila melanogaster (Fruit fly)).